Here is a 38-residue protein sequence, read N- to C-terminus: Large ribosomal subunit protein bL36c (38 aa).

This sequence belongs to the bacterial ribosomal protein bL36 family.

It localises to the plastid. Its subcellular location is the chloroplast. The polypeptide is Large ribosomal subunit protein bL36c (rpl36) (Mesostigma viride (Green alga)).